Reading from the N-terminus, the 756-residue chain is 1,4-alpha-glucan branching enzyme GlgB (756 aa).

The active-site Nucleophile is the D431. Residue E484 is the Proton donor of the active site.

This sequence belongs to the glycosyl hydrolase 13 family. GlgB subfamily. In terms of assembly, monomer.

The enzyme catalyses Transfers a segment of a (1-&gt;4)-alpha-D-glucan chain to a primary hydroxy group in a similar glucan chain.. Its pathway is glycan biosynthesis; glycogen biosynthesis. Functionally, catalyzes the formation of the alpha-1,6-glucosidic linkages in glycogen by scission of a 1,4-alpha-linked oligosaccharide from growing alpha-1,4-glucan chains and the subsequent attachment of the oligosaccharide to the alpha-1,6 position. The polypeptide is 1,4-alpha-glucan branching enzyme GlgB (Prochlorococcus marinus (strain MIT 9303)).